Consider the following 356-residue polypeptide: Glycerophosphodiester phosphodiesterase (356 aa).

An N-terminal signal peptide occupies residues 1 to 20 (MRGTYCVTLWGGVFAALVAG). C21 carries the N-palmitoyl cysteine lipid modification. Residue C21 is the site of S-diacylglycerol cysteine attachment. Residues 25-314 (RMIVAYRGAA…CHVHTVRKET (290 aa)) enclose the GP-PDE domain.

Belongs to the glycerophosphoryl diester phosphodiesterase family. In terms of processing, palmitoylated upon expression of a fusion protein with first 40 residues fused to PhoA in E.coli.

It localises to the cell inner membrane. The catalysed reaction is a sn-glycero-3-phosphodiester + H2O = an alcohol + sn-glycerol 3-phosphate + H(+). Functionally, glycerophosphoryl diester phosphodiesterase hydrolyzes deacylated phospholipids to G3P and the corresponding alcohols. Its function is as follows. Binds human IgA, IgD and the Fc portion of IgG but not IgM, which may contribute to evasion of the human immune system. This Treponema pallidum (strain Nichols) protein is Glycerophosphodiester phosphodiesterase (glpQ).